The following is a 233-amino-acid chain: tRNA (guanine-N(7)-)-methyltransferase (233 aa).

Residues Glu-65, Glu-90, Asp-117, and Asp-139 each contribute to the S-adenosyl-L-methionine site. Asp-139 is a catalytic residue. Substrate contacts are provided by residues Lys-143, Asp-175, and 212-215 (TRYE).

It belongs to the class I-like SAM-binding methyltransferase superfamily. TrmB family.

It catalyses the reaction guanosine(46) in tRNA + S-adenosyl-L-methionine = N(7)-methylguanosine(46) in tRNA + S-adenosyl-L-homocysteine. It participates in tRNA modification; N(7)-methylguanine-tRNA biosynthesis. Catalyzes the formation of N(7)-methylguanine at position 46 (m7G46) in tRNA. The polypeptide is tRNA (guanine-N(7)-)-methyltransferase (Roseobacter denitrificans (strain ATCC 33942 / OCh 114) (Erythrobacter sp. (strain OCh 114))).